The sequence spans 406 residues: E3 ubiquitin-protein ligase RING1 (406 aa).

Position 24 is a phosphothreonine (T24). The necessary for transcriptional repression stretch occupies residues 30–234 (MDGTEIAVSP…GGAGSEDSGD (205 aa)). Residue S38 is modified to Phosphoserine. The RING-type zinc finger occupies 48–88 (CPICLDMLKNTMTTKECLHRFCSDCIVTALRSGNKECPTCR). Phosphoserine is present on residues S140, S187, and S190. 2 disordered regions span residues 151 to 263 (HRAQ…GEIE) and 309 to 354 (QQQE…PSLE). Acidic residues predominate over residues 175–187 (EPGEGEGDGEDIS). The Nuclear localization signal motif lies at 201–204 (KRPR). Over residues 205–228 (GGGAGGSSVGTGGGAAGGACGGAG) the composition is skewed to gly residues. T215 bears the Phosphothreonine mark. Residues S229 and S232 each carry the phosphoserine modification. Residues 230 to 406 (EDSGDRGGTL…LCYAPTKDPK (177 aa)) are necessary for interaction with CBX2. Over residues 235 to 244 (RGGTLGGGTL) the composition is skewed to gly residues. A compositionally biased stretch (pro residues) spans 246 to 258 (PPSPPGAPSPPEP). Residues S248 and S254 each carry the phosphoserine modification. Gly residues predominate over residues 317 to 343 (GGPGGGASDTGGPDGGGGERGVSGGGE).

In terms of assembly, component of chromatin-associated Polycomb (PcG) complexes. Part of the E2F6.com-1 complex in G0 phase composed of E2F6, MGA, MAX, TFDP1, CBX3, BAT8, EUHMTASE1, RING1, RNF2/RING2 MBLR, L3MBTL2 and YAF2. Interacts with CBX2 and PCGF6. Component of a PRC1-like complex. Component of repressive BCOR complex containing Polycomb group subcomplex at least composed of RYBP, PCGF1, BCOR and RNF2/RING2. Interacts with BMI1, PHC2, PCGF2, RNF2; CBX6, CBX7 and CBX8. Interacts with MN1. Interacts with USP26.

It localises to the nucleus speckle. The enzyme catalyses S-ubiquitinyl-[E2 ubiquitin-conjugating enzyme]-L-cysteine + [acceptor protein]-L-lysine = [E2 ubiquitin-conjugating enzyme]-L-cysteine + N(6)-ubiquitinyl-[acceptor protein]-L-lysine.. It functions in the pathway protein modification; protein ubiquitination. In terms of biological role, constitutes one of the E3 ubiquitin-protein ligases that mediate monoubiquitination of 'Lys-119' of histone H2A, thereby playing a central role in histone code and gene regulation. H2A 'Lys-119' ubiquitination gives a specific tag for epigenetic transcriptional repression and participates in X chromosome inactivation of female mammals. Essential component of a Polycomb group (PcG) multiprotein PRC1-like complex, a complex class required to maintain the transcriptionally repressive state of many genes, including Hox genes, throughout development. PcG PRC1 complex acts via chromatin remodeling and modification of histones, rendering chromatin heritably changed in its expressibility. Compared to RNF2/RING2, it does not have the main E3 ubiquitin ligase activity on histone H2A, and it may rather act as a modulator of RNF2/RING2 activity. The protein is E3 ubiquitin-protein ligase RING1 of Rattus norvegicus (Rat).